Consider the following 500-residue polypeptide: L-arabinose isomerase (500 aa).

Mn(2+) is bound by residues Glu306, Glu333, His350, and His450.

The protein belongs to the arabinose isomerase family. Homohexamer. The cofactor is Mn(2+).

It catalyses the reaction beta-L-arabinopyranose = L-ribulose. It participates in carbohydrate degradation; L-arabinose degradation via L-ribulose; D-xylulose 5-phosphate from L-arabinose (bacterial route): step 1/3. Its function is as follows. Catalyzes the conversion of L-arabinose to L-ribulose. This Shigella dysenteriae serotype 1 (strain Sd197) protein is L-arabinose isomerase.